The primary structure comprises 450 residues: Putative MYST-like histone acetyltransferase 1 (450 aa).

Residues 63–122 (LEVGTRVMCRWRDQKLHPVKVIERRKSSTSSSPADYEYYVHYTEFNRRLDEWVKLEQLDL) form the Tudor-knot domain. Positions 174–445 (TKVKNIAKIE…VDVSKLIWTP (272 aa)) constitute an MYST-type HAT domain. A C2HC MYST-type zinc finger spans residues 207 to 232 (LFFCEFCLNFMKRKEQLQRHMKKCDL). Lysine 274 carries the N6-acetyllysine; by autocatalysis modification. Residues 317-319 (ILT) and 324-330 (QRKGYGK) each bind acetyl-CoA. Glutamate 350 functions as the Proton donor/acceptor in the catalytic mechanism. Serine 354 provides a ligand contact to acetyl-CoA.

Belongs to the MYST (SAS/MOZ) family. Post-translationally, autoacetylation at Lys-274 is required for proper function.

Its subcellular location is the nucleus. The catalysed reaction is L-lysyl-[protein] + acetyl-CoA = N(6)-acetyl-L-lysyl-[protein] + CoA + H(+). Functionally, histone acetyltransferase which may be involved in transcriptional activation. This is Putative MYST-like histone acetyltransferase 1 from Oryza sativa subsp. japonica (Rice).